A 341-amino-acid chain; its full sequence is MVSSQPKYDLIREVGRGSYGVVYEAVIRKTSARVAVKKIRCHAPENVELALREFWALSSIKSQHPNVIHLEECILQKDGMVQKMSHGSNSSLYLQLVETSLKGEIAFDPRSAYYLWFVMDFCDGGDMNEYLLSRKPNRKTNTSFMLQLSSALAFLHKNQIIHRDLKPDNILISQTRLDTSDLEPTLKVADFGLSKVCSASGQNPEEPVSVNKCFLSTACGTDFYMAPEVWEGHYTAKADIFALGIIIWAMLERITFIDTETKKELLGSYVKQGTEIVPVGEALLENPKMELLIPVKKKSMNGRMKQLIKEMLAANPQDRPDAFELELRLVQIAFKDSSWET.

Positions 8-334 constitute a Protein kinase domain; that stretch reads YDLIREVGRG…LELRLVQIAF (327 aa). Residues 14-22 and Lys-37 each bind ATP; that span reads VGRGSYGVV. Asp-164 functions as the Proton acceptor in the catalytic mechanism.

It belongs to the protein kinase superfamily. Ser/Thr protein kinase family. As to expression, expressed in liver, kidney, pancreas, spleen, thymus and prostate.

Its subcellular location is the nucleus. It carries out the reaction L-seryl-[protein] + ATP = O-phospho-L-seryl-[protein] + ADP + H(+). The catalysed reaction is L-threonyl-[protein] + ATP = O-phospho-L-threonyl-[protein] + ADP + H(+). In Homo sapiens (Human), this protein is Serine/threonine-protein kinase PDIK1L (PDIK1L).